We begin with the raw amino-acid sequence, 151 residues long: uncharacterized protein (151 aa).

Positions 1-48 (MRMAPTESTEGRRLWPGPREGGSGKETTSEKLSNLPRPHSYSPKRADA) are disordered.

This is an uncharacterized protein from Homo sapiens (Human).